A 120-amino-acid chain; its full sequence is Ribosome-binding factor A (120 aa).

Belongs to the RbfA family. As to quaternary structure, monomer. Binds 30S ribosomal subunits, but not 50S ribosomal subunits or 70S ribosomes.

It is found in the cytoplasm. In terms of biological role, one of several proteins that assist in the late maturation steps of the functional core of the 30S ribosomal subunit. Associates with free 30S ribosomal subunits (but not with 30S subunits that are part of 70S ribosomes or polysomes). Required for efficient processing of 16S rRNA. May interact with the 5'-terminal helix region of 16S rRNA. This Lactobacillus delbrueckii subsp. bulgaricus (strain ATCC 11842 / DSM 20081 / BCRC 10696 / JCM 1002 / NBRC 13953 / NCIMB 11778 / NCTC 12712 / WDCM 00102 / Lb 14) protein is Ribosome-binding factor A.